A 386-amino-acid polypeptide reads, in one-letter code: Homogentisate solanesyltransferase, chloroplastic (386 aa).

The transit peptide at 1-69 (MELSISQSPR…STNYRKISIR (69 aa)) directs the protein to the chloroplast. A run of 8 helical transmembrane segments spans residues 130-150 (VLKALSGLLALICGNGYIVGI), 181-201 (LVIFFAIAGLLVVGFNFGPFI), 204-220 (LYSLGLFLGTIYSVPPL), 225-245 (FPVAAFLIIATVRGFLLNFGV), 259-279 (WSAPVAFITSFVTLFALVIAI), 306-326 (IAFLGSGLLLVNYVSAISLAF), 335-355 (SLMIPAHVILASGLIFQTWVL), and 365-385 (ISGYYRFIWNLFYAEYLLFPF).

It belongs to the UbiA prenyltransferase family.

The protein resides in the plastid. The protein localises to the chloroplast membrane. The catalysed reaction is all-trans-nonaprenyl diphosphate + homogentisate + H(+) = 2-methyl-6-(all-trans-nonaprenyl)benzene-1,4-diol + CO2 + diphosphate. With respect to regulation, inhibited by haloxydine (3,5-dichloro-2,6-difluoro-4-haloxypyridine). Involved in the synthesis of plastoquinone-9. Can use both homogentisic acid and 2,5-dihydroxyphenylacetic acid gamma-lactone as prenyl acceptors, and solanesyl diphosphate &gt; farnesyl diphosphate &gt; geranylgeranyl diphosphate &gt;&gt; phytyl diphosphate as prenyl donors. Do not catalyze the decardoxylation of homogentisate uncoupled from prenylation. This chain is Homogentisate solanesyltransferase, chloroplastic (HST), found in Arabidopsis thaliana (Mouse-ear cress).